Here is a 97-residue protein sequence, read N- to C-terminus: Large ribosomal subunit protein bL27 (97 aa).

Over residues 1-10 (MVKLNLSNLQ) the composition is skewed to polar residues. The propeptide occupies 1–12 (MVKLNLSNLQHF). The tract at residues 1–38 (MVKLNLSNLQHFAHKKGGGSTSNGRDSQAKRLGAKAAD) is disordered.

The protein belongs to the bacterial ribosomal protein bL27 family. The N-terminus is cleaved by ribosomal processing cysteine protease Prp.

In Streptococcus equi subsp. zooepidemicus (strain H70), this protein is Large ribosomal subunit protein bL27.